The primary structure comprises 365 residues: Protein-glutamate methylesterase/protein-glutamine glutaminase (365 aa).

One can recognise a Response regulatory domain in the interval lysine 5 to lysine 122. Aspartate 56 carries the post-translational modification 4-aspartylphosphate. Residues isoleucine 146–serine 155 show a composition bias toward basic and acidic residues. A disordered region spans residues isoleucine 146 to leucine 167. Over residues threonine 156–leucine 167 the composition is skewed to polar residues. The CheB-type methylesterase domain maps to isoleucine 177–isoleucine 363. Catalysis depends on residues serine 182, histidine 208, and aspartate 305.

The protein belongs to the CheB family. In terms of processing, phosphorylated by CheA. Phosphorylation of the N-terminal regulatory domain activates the methylesterase activity.

It is found in the cytoplasm. The catalysed reaction is [protein]-L-glutamate 5-O-methyl ester + H2O = L-glutamyl-[protein] + methanol + H(+). The enzyme catalyses L-glutaminyl-[protein] + H2O = L-glutamyl-[protein] + NH4(+). Involved in chemotaxis. Part of a chemotaxis signal transduction system that modulates chemotaxis in response to various stimuli. Catalyzes the demethylation of specific methylglutamate residues introduced into the chemoreceptors (methyl-accepting chemotaxis proteins or MCP) by CheR. Also mediates the irreversible deamidation of specific glutamine residues to glutamic acid. The chain is Protein-glutamate methylesterase/protein-glutamine glutaminase from Methanococcus maripaludis (strain DSM 14266 / JCM 13030 / NBRC 101832 / S2 / LL).